Reading from the N-terminus, the 120-residue chain is MASIIFTAKDIFDQDFKREVRGYSKSEVDEFLDDIIKDYETYAALVKELREENRRLKEELAAKPVEKAPVQPTQPVQSTQATQSTVESFSQMTSATNFDILKRLNRLEKEVFGKQILDRE.

Residues Leu-32–Ala-68 adopt a coiled-coil conformation. The interval Lys-63–Ser-88 is disordered. Positions Ala-68–Val-86 are enriched in low complexity.

The protein belongs to the GpsB family. As to quaternary structure, forms polymers through the coiled coil domains. Interacts with PBP1, MreC and EzrA.

The protein resides in the cytoplasm. Functionally, divisome component that associates with the complex late in its assembly, after the Z-ring is formed, and is dependent on DivIC and PBP2B for its recruitment to the divisome. Together with EzrA, is a key component of the system that regulates PBP1 localization during cell cycle progression. Its main role could be the removal of PBP1 from the cell pole after pole maturation is completed. Also contributes to the recruitment of PBP1 to the division complex. Not essential for septum formation. In Streptococcus sanguinis (strain SK36), this protein is Cell cycle protein GpsB.